Consider the following 334-residue polypeptide: MTKVYYDETVTQDALQGKKIAVIGYGSQGHAHAQNLKDNGYDVVIGLRPGRSFNKAKEDGFDVYTVSEATQQADVVMVLLPDEIQGEVYNKEIKPYLEKGNALAFAHGFNIHFSVIEPPSDVDVFLVAPKGPGHLVRRTFVEGSAVPALFGVQQDATGQARNIALSYAKGIGATRAGVIETTFKEETETDLFGEQAVLCGGVSKLIQSGFETLVEAGYQPELAYFEVLHEMKLIVDLMYEGGMENVRYSISNTAEFGDYVSGPRVITPNVKENMKKVLEDIQNGNFSRRFVEDNKNGFKEFYQLREDQHGHQIEQVGRELREMMPFIKSKSIEK.

The region spanning 2-181 (TKVYYDETVT…GATRAGVIET (180 aa)) is the KARI N-terminal Rossmann domain. NADP(+) contacts are provided by residues 25–28 (YGSQ), Arg-48, Ser-52, and 82–85 (DEIQ). The active site involves His-107. Position 133 (Gly-133) interacts with NADP(+). The KARI C-terminal knotted domain maps to 182-327 (TFKEETETDL…RELREMMPFI (146 aa)). Positions 190, 194, 226, and 230 each coordinate Mg(2+). Ser-251 serves as a coordination point for substrate.

Belongs to the ketol-acid reductoisomerase family. Mg(2+) serves as cofactor.

The enzyme catalyses (2R)-2,3-dihydroxy-3-methylbutanoate + NADP(+) = (2S)-2-acetolactate + NADPH + H(+). The catalysed reaction is (2R,3R)-2,3-dihydroxy-3-methylpentanoate + NADP(+) = (S)-2-ethyl-2-hydroxy-3-oxobutanoate + NADPH + H(+). It participates in amino-acid biosynthesis; L-isoleucine biosynthesis; L-isoleucine from 2-oxobutanoate: step 2/4. The protein operates within amino-acid biosynthesis; L-valine biosynthesis; L-valine from pyruvate: step 2/4. Functionally, involved in the biosynthesis of branched-chain amino acids (BCAA). Catalyzes an alkyl-migration followed by a ketol-acid reduction of (S)-2-acetolactate (S2AL) to yield (R)-2,3-dihydroxy-isovalerate. In the isomerase reaction, S2AL is rearranged via a Mg-dependent methyl migration to produce 3-hydroxy-3-methyl-2-ketobutyrate (HMKB). In the reductase reaction, this 2-ketoacid undergoes a metal-dependent reduction by NADPH to yield (R)-2,3-dihydroxy-isovalerate. This chain is Ketol-acid reductoisomerase (NADP(+)), found in Staphylococcus epidermidis (strain ATCC 35984 / DSM 28319 / BCRC 17069 / CCUG 31568 / BM 3577 / RP62A).